The sequence spans 603 residues: Polypeptide N-acetylgalactosaminyltransferase 10 (603 aa).

At methionine 1–alanine 11 the chain is on the cytoplasmic side. A helical; Signal-anchor for type II membrane protein transmembrane segment spans residues valine 12–tyrosine 31. Over arginine 32–asparagine 603 the chain is Lumenal. Residues glycine 38–glutamine 59 form a disordered region. Positions alanine 45–serine 55 are enriched in low complexity. N-linked (GlcNAc...) asparagine glycans are attached at residues asparagine 124 and asparagine 146. Cystine bridges form between cysteine 135-cysteine 365, cysteine 356-cysteine 432, cysteine 471-cysteine 488, cysteine 523-cysteine 538, and cysteine 563-cysteine 578. Positions leucine 144–arginine 253 are catalytic subdomain A. 4 residues coordinate substrate: histidine 154, glutamate 156, aspartate 185, and arginine 214. Aspartate 237 is a binding site for Mn(2+). A substrate-binding site is contributed by serine 238. Residue histidine 239 coordinates Mn(2+). Residues proline 311 to arginine 373 form a catalytic subdomain B region. Position 342 (tryptophan 342) interacts with substrate. Residue histidine 370 participates in Mn(2+) binding. Positions 373 and 378 each coordinate substrate. The segment at arginine 373 to valine 384 is flexible loop. The Ricin B-type lectin domain maps to alanine 458 to glutamate 590. An N-linked (GlcNAc...) asparagine glycan is attached at asparagine 593.

It belongs to the glycosyltransferase 2 family. GalNAc-T subfamily. The cofactor is Mn(2+). In terms of tissue distribution, widely expressed. Expressed at high level in small intestine, and at intermediate levels in stomach, pancreas, ovary, thyroid gland and spleen. Weakly expressed in other tissues.

The protein localises to the golgi apparatus membrane. The catalysed reaction is L-seryl-[protein] + UDP-N-acetyl-alpha-D-galactosamine = a 3-O-[N-acetyl-alpha-D-galactosaminyl]-L-seryl-[protein] + UDP + H(+). The enzyme catalyses L-threonyl-[protein] + UDP-N-acetyl-alpha-D-galactosamine = a 3-O-[N-acetyl-alpha-D-galactosaminyl]-L-threonyl-[protein] + UDP + H(+). Its pathway is protein modification; protein glycosylation. In terms of biological role, catalyzes the initial reaction in O-linked oligosaccharide biosynthesis, the transfer of an N-acetyl-D-galactosamine residue to a serine or threonine residue on the protein receptor. Has activity toward Muc5Ac and EA2 peptide substrates. The polypeptide is Polypeptide N-acetylgalactosaminyltransferase 10 (GALNT10) (Homo sapiens (Human)).